Here is a 283-residue protein sequence, read N- to C-terminus: Phosphatidylglycerol--prolipoprotein diacylglyceryl transferase (283 aa).

7 helical membrane passes run 18 to 38 (LFGH…IILG), 59 to 79 (LAVY…VLFY), 91 to 111 (IFVT…IIIA), 124 to 144 (ILWV…MIRL), 185 to 205 (TQIY…WLYW), 213 to 233 (YSGL…FIIE), and 251 to 271 (GLNM…WLII). R143 contributes to the a 1,2-diacyl-sn-glycero-3-phospho-(1'-sn-glycerol) binding site.

It belongs to the Lgt family.

Its subcellular location is the cell inner membrane. It carries out the reaction L-cysteinyl-[prolipoprotein] + a 1,2-diacyl-sn-glycero-3-phospho-(1'-sn-glycerol) = an S-1,2-diacyl-sn-glyceryl-L-cysteinyl-[prolipoprotein] + sn-glycerol 1-phosphate + H(+). It participates in protein modification; lipoprotein biosynthesis (diacylglyceryl transfer). Catalyzes the transfer of the diacylglyceryl group from phosphatidylglycerol to the sulfhydryl group of the N-terminal cysteine of a prolipoprotein, the first step in the formation of mature lipoproteins. In Porphyromonas gingivalis (strain ATCC 33277 / DSM 20709 / CIP 103683 / JCM 12257 / NCTC 11834 / 2561), this protein is Phosphatidylglycerol--prolipoprotein diacylglyceryl transferase.